Here is a 242-residue protein sequence, read N- to C-terminus: Transcriptional activator protein RaiR (242 aa).

The HTH luxR-type domain maps to 177–242 (KVADLPRLSR…EQLLGPRRSN (66 aa)). Residues 201–220 (AKQICARLSISVSAVQLYLA) constitute a DNA-binding region (H-T-H motif).

The protein belongs to the autoinducer-regulated transcriptional regulatory protein family.

The protein is Transcriptional activator protein RaiR (raiR) of Rhizobium etli.